Consider the following 120-residue polypeptide: UPF0231 protein YacL (120 aa).

It belongs to the UPF0231 family.

The sequence is that of UPF0231 protein YacL from Salmonella heidelberg (strain SL476).